A 288-amino-acid chain; its full sequence is Type II restriction enzyme DpnII (288 aa).

The protein belongs to the DpnII type II restriction endonuclease family. In terms of assembly, homodimer.

The enzyme catalyses Endonucleolytic cleavage of DNA to give specific double-stranded fragments with terminal 5'-phosphates.. Its function is as follows. A P subtype restriction enzyme that recognizes the double-stranded unmethylated sequence 5'-GATC-3' and cleaves before G-1. This is Type II restriction enzyme DpnII from Streptococcus pneumoniae.